The sequence spans 333 residues: PDZ domain-containing protein GIPC1 (333 aa).

Residues 1-11 are compositionally biased toward basic residues; sequence MPLGLGRRKKA. The interval 1–54 is disordered; it reads MPLGLGRRKKAPPLVENEEAEPGRGGLGVGEPGPLGGGGSGGPQMGLPPPPPAL. Positions 23–44 are enriched in gly residues; that stretch reads GRGGLGVGEPGPLGGGGSGGPQ. Ser68 is subject to Phosphoserine. A PDZ domain is found at 133 to 213; it reads EVEVFKSEDA…GRTFTLKLTE (81 aa). A phosphoserine mark is found at Ser222, Ser225, and Ser232. The tract at residues 223–244 is disordered; sequence QRSAGGRPGSGPQLGTGRGTLR. Residues 228 to 240 are compositionally biased toward gly residues; the sequence is GRPGSGPQLGTGR. Thr242 bears the Phosphothreonine mark. At Ser247 the chain carries Phosphoserine.

The protein belongs to the GIPC family. As to quaternary structure, interacts with GLUT1 (C-terminus), ACTN1, KIF1B, MYO6, PLEKHG5, SDC4/syndecan-4 and SEMA4C/semaphorin-4C. Interacts with RGS19 C-terminus. Interacts with HTLV-I Tax through the PDZ domain. Widely expressed. Expressed in skeletal muscle (at protein level).

The protein resides in the cytoplasm. The protein localises to the membrane. In terms of biological role, may be involved in G protein-linked signaling. In Homo sapiens (Human), this protein is PDZ domain-containing protein GIPC1 (GIPC1).